Reading from the N-terminus, the 279-residue chain is Large ribosomal subunit protein uL2 (279 aa).

Residues 223–279 (VVMNPVDHPHGGGEGRTSGGRHPVSPWGQPTKGYKTRRSARPSDKFIVQKRKRNRNR) are disordered. Residues 270 to 279 (VQKRKRNRNR) are compositionally biased toward basic residues.

This sequence belongs to the universal ribosomal protein uL2 family. In terms of assembly, part of the 50S ribosomal subunit. Forms a bridge to the 30S subunit in the 70S ribosome.

In terms of biological role, one of the primary rRNA binding proteins. Required for association of the 30S and 50S subunits to form the 70S ribosome, for tRNA binding and peptide bond formation. It has been suggested to have peptidyltransferase activity; this is somewhat controversial. Makes several contacts with the 16S rRNA in the 70S ribosome. In Leptospira borgpetersenii serovar Hardjo-bovis (strain JB197), this protein is Large ribosomal subunit protein uL2.